The sequence spans 709 residues: Probable serine/threonine-protein kinase zyg-1 (709 aa).

The 239-residue stretch at 13–251 (FQNLQQIGQG…LKEIVMTDYV (239 aa)) folds into the Protein kinase domain. Residues 19-27 (IGQGGFGVV) and Lys-41 each bind ATP. Residue Asp-130 is the Proton acceptor of the active site. Disordered stretches follow at residues 254-329 (KMGE…DRAR) and 591-633 (SSSQ…PAAT). Composition is skewed to basic and acidic residues over residues 262–291 (SREH…ERRP) and 302–313 (SRRDPDGYRAAH). The span at 607–627 (PLSSRTTSSLNVRNGVSSDEN) shows a compositional bias: polar residues.

The protein belongs to the protein kinase superfamily. Ser/Thr protein kinase family.

It is found in the cytoplasm. It localises to the cytoskeleton. The protein resides in the microtubule organizing center. Its subcellular location is the centrosome. The protein localises to the centriole. It carries out the reaction L-seryl-[protein] + ATP = O-phospho-L-seryl-[protein] + ADP + H(+). The enzyme catalyses L-threonyl-[protein] + ATP = O-phospho-L-threonyl-[protein] + ADP + H(+). In terms of biological role, protein kinase that plays a central role in centrosome duplication. Paternal copy is required to regulate synthesis of daughter centrioles prior to fertilization. Maternal copy regulates centrosome duplication during later cell cycles. Functions upstream of sas-5 and sas-6, and is required for their localization to the centrosome. In Caenorhabditis briggsae, this protein is Probable serine/threonine-protein kinase zyg-1 (zyg-1).